The chain runs to 206 residues: Holliday junction branch migration complex subunit RuvA (206 aa).

The segment at 1-64 (MIGRLHGIII…EDAQLLYGFN (64 aa)) is domain I. The domain II stretch occupies residues 65 to 143 (TRQERTLFRE…GWISHDLFTP (79 aa)). The tract at residues 144 to 157 (YTDAAPVDHEPSLA) is flexible linker. Residues 158 to 206 (PADTVESEAVAALLALGYKPQQASLVVSKVIKPEMTVENVIREALRSML) are domain III.

This sequence belongs to the RuvA family. As to quaternary structure, homotetramer. Forms an RuvA(8)-RuvB(12)-Holliday junction (HJ) complex. HJ DNA is sandwiched between 2 RuvA tetramers; dsDNA enters through RuvA and exits via RuvB. An RuvB hexamer assembles on each DNA strand where it exits the tetramer. Each RuvB hexamer is contacted by two RuvA subunits (via domain III) on 2 adjacent RuvB subunits; this complex drives branch migration. In the full resolvosome a probable DNA-RuvA(4)-RuvB(12)-RuvC(2) complex forms which resolves the HJ.

It is found in the cytoplasm. In terms of biological role, the RuvA-RuvB-RuvC complex processes Holliday junction (HJ) DNA during genetic recombination and DNA repair, while the RuvA-RuvB complex plays an important role in the rescue of blocked DNA replication forks via replication fork reversal (RFR). RuvA specifically binds to HJ cruciform DNA, conferring on it an open structure. The RuvB hexamer acts as an ATP-dependent pump, pulling dsDNA into and through the RuvAB complex. HJ branch migration allows RuvC to scan DNA until it finds its consensus sequence, where it cleaves and resolves the cruciform DNA. This Tolumonas auensis (strain DSM 9187 / NBRC 110442 / TA 4) protein is Holliday junction branch migration complex subunit RuvA.